A 732-amino-acid chain; its full sequence is Prolyl endopeptidase-like (732 aa).

Active-site charge relay system residues include S575, D661, and H707.

The protein belongs to the peptidase S9A family. Homodimer.

Its subcellular location is the cytoplasm. It is found in the cytosol. Functionally, serine peptidase whose precise substrate specificity remains unclear. Does not cleave peptides after a arginine or lysine residue. Regulates trans-Golgi network morphology and sorting by regulating the membrane binding of the AP-1 complex. May play a role in the regulation of synaptic vesicle exocytosis. In Gallus gallus (Chicken), this protein is Prolyl endopeptidase-like (PREPL).